We begin with the raw amino-acid sequence, 198 residues long: FMN-dependent NADH:quinone oxidoreductase 2 (198 aa).

An FMN-binding site is contributed by 136-139 (SRGG).

The protein belongs to the azoreductase type 1 family. Homodimer. It depends on FMN as a cofactor.

The catalysed reaction is 2 a quinone + NADH + H(+) = 2 a 1,4-benzosemiquinone + NAD(+). The enzyme catalyses N,N-dimethyl-1,4-phenylenediamine + anthranilate + 2 NAD(+) = 2-(4-dimethylaminophenyl)diazenylbenzoate + 2 NADH + 2 H(+). In terms of biological role, quinone reductase that provides resistance to thiol-specific stress caused by electrophilic quinones. Also exhibits azoreductase activity. Catalyzes the reductive cleavage of the azo bond in aromatic azo compounds to the corresponding amines. This is FMN-dependent NADH:quinone oxidoreductase 2 from Clostridium perfringens (strain 13 / Type A).